The following is a 241-amino-acid chain: Probable histone-lysine N-methyltransferase set-23 (241 aa).

In terms of domain architecture, Pre-SET spans 25-85 (QGCDCETQCS…SCRNKVVQNG (61 aa)). Zn(2+) contacts are provided by Cys-27, Cys-29, Cys-33, Cys-39, Cys-41, Cys-64, Cys-68, Cys-70, and Cys-77. Positions 88 to 210 (KKLKIFSTSE…VGEELSYDYG (123 aa)) constitute an SET domain. S-adenosyl-L-methionine contacts are provided by residues 98 to 100 (KGD), Asp-138, Tyr-140, Arg-167, and 170 to 171 (NH). The Zn(2+) site is built by Cys-173, Cys-222, Cys-224, and Cys-229. The region spanning 218–234 (NRKLCLCRSENCRKYLP) is the Post-SET domain.

The protein belongs to the class V-like SAM-binding methyltransferase superfamily. Histone-lysine methyltransferase family. Suvar3-9 subfamily.

It is found in the nucleus. The protein resides in the chromosome. It catalyses the reaction L-lysyl-[histone] + S-adenosyl-L-methionine = N(6)-methyl-L-lysyl-[histone] + S-adenosyl-L-homocysteine + H(+). Functionally, probable histone methyltransferase required for embryonic development. This chain is Probable histone-lysine N-methyltransferase set-23, found in Caenorhabditis briggsae.